The primary structure comprises 213 residues: dITP/XTP pyrophosphatase (213 aa).

7–12 contacts substrate; sequence TSNLDK. D74 acts as the Proton acceptor in catalysis. A Mg(2+)-binding site is contributed by D74. Substrate contacts are provided by residues S75, 165 to 168, K188, and 193 to 194; these read FGYD and HR.

Belongs to the HAM1 NTPase family. In terms of assembly, homodimer. The cofactor is Mg(2+).

It carries out the reaction XTP + H2O = XMP + diphosphate + H(+). The catalysed reaction is dITP + H2O = dIMP + diphosphate + H(+). It catalyses the reaction ITP + H2O = IMP + diphosphate + H(+). Its function is as follows. Pyrophosphatase that catalyzes the hydrolysis of nucleoside triphosphates to their monophosphate derivatives, with a high preference for the non-canonical purine nucleotides XTP (xanthosine triphosphate), dITP (deoxyinosine triphosphate) and ITP. Seems to function as a house-cleaning enzyme that removes non-canonical purine nucleotides from the nucleotide pool, thus preventing their incorporation into DNA/RNA and avoiding chromosomal lesions. The sequence is that of dITP/XTP pyrophosphatase from Campylobacter concisus (strain 13826).